The sequence spans 326 residues: Phospho-N-acetylmuramoyl-pentapeptide-transferase (326 aa).

The next 10 membrane-spanning stretches (helical) occupy residues 2–22 (ILATKVFFTSFVFGFILFPYF), 51–71 (VPPMGGIIILTSSLLPILLWV), 73–93 (LTPEILLLILITLFFALLGFI), 113–133 (ILIQFIVALVGVFILKLYSAE), 143–163 (GVIIDFGYLYVPFAAFVIVGS), 175–195 (GLAATQVITSFAFLGLIAYIT), 199–219 (MNITLFCIAFIGAILSFLWFN), 225–245 (IFMGDVGSLSVGAALGLTSVL), 250–270 (MLFAVIGIIFVIETLSVIIQI), and 305–325 (VIVMKFWIISIICSVFTITFL).

The protein belongs to the glycosyltransferase 4 family. MraY subfamily. Mg(2+) serves as cofactor.

It is found in the cell membrane. It catalyses the reaction UDP-N-acetyl-alpha-D-muramoyl-L-alanyl-gamma-D-glutamyl-meso-2,6-diaminopimeloyl-D-alanyl-D-alanine + di-trans,octa-cis-undecaprenyl phosphate = di-trans,octa-cis-undecaprenyl diphospho-N-acetyl-alpha-D-muramoyl-L-alanyl-D-glutamyl-meso-2,6-diaminopimeloyl-D-alanyl-D-alanine + UMP. Its pathway is cell wall biogenesis; peptidoglycan biosynthesis. Its function is as follows. Catalyzes the initial step of the lipid cycle reactions in the biosynthesis of the cell wall peptidoglycan: transfers peptidoglycan precursor phospho-MurNAc-pentapeptide from UDP-MurNAc-pentapeptide onto the lipid carrier undecaprenyl phosphate, yielding undecaprenyl-pyrophosphoryl-MurNAc-pentapeptide, known as lipid I. In Wolbachia sp. subsp. Drosophila simulans (strain wRi), this protein is Phospho-N-acetylmuramoyl-pentapeptide-transferase.